Reading from the N-terminus, the 28-residue chain is Chassatide C12 (28 aa).

The cyclopeptide (Glu-Asn) cross-link spans 1 to 28 (EYCGESCYLIPCFTPGCYCVSRQCVNKN). 3 disulfides stabilise this stretch: Cys3-Cys17, Cys7-Cys19, and Cys12-Cys24.

In terms of processing, this is a cyclic peptide. As to expression, expressed in fruit, pedicel, leaf and stem but not in root (at protein level).

Its function is as follows. Probably participates in a plant defense mechanism. The chain is Chassatide C12 from Chassalia chartacea (Chassalia curviflora).